The primary structure comprises 166 residues: UPF0304 protein VFMJ11_1926 (166 aa).

The protein belongs to the UPF0304 family.

The protein is UPF0304 protein VFMJ11_1926 of Aliivibrio fischeri (strain MJ11) (Vibrio fischeri).